The chain runs to 608 residues: Glutamyl-tRNA(Gln) amidotransferase subunit E (608 aa).

The interval 401 to 428 (PEETRAANPDGTTRFLRPRPGAARMYPE) is disordered.

The protein belongs to the GatB/GatE family. GatE subfamily. In terms of assembly, heterodimer of GatD and GatE.

It catalyses the reaction L-glutamyl-tRNA(Gln) + L-glutamine + ATP + H2O = L-glutaminyl-tRNA(Gln) + L-glutamate + ADP + phosphate + H(+). In terms of biological role, allows the formation of correctly charged Gln-tRNA(Gln) through the transamidation of misacylated Glu-tRNA(Gln) in organisms which lack glutaminyl-tRNA synthetase. The reaction takes place in the presence of glutamine and ATP through an activated gamma-phospho-Glu-tRNA(Gln). The GatDE system is specific for glutamate and does not act on aspartate. The chain is Glutamyl-tRNA(Gln) amidotransferase subunit E from Pyrobaculum arsenaticum (strain DSM 13514 / JCM 11321 / PZ6).